Consider the following 257-residue polypeptide: Auxin-responsive protein IAA17 (257 aa).

Disordered regions lie at residues 1–51 and 85–119; these read MSPP…PAAT and GKKA…QVVG. The EAR-like (transcriptional repression) signature appears at 33–37; that stretch reads LRLGL. A compositionally biased stretch (low complexity) spans 105 to 118; it reads AAAPQAPAAKAQVV. Residues 151 to 239 enclose the PB1 domain; it reads FLYVKVSMDG…SCRRLRIMKG (89 aa).

It belongs to the Aux/IAA family. As to quaternary structure, homodimers and heterodimers. In terms of tissue distribution, highly expressed in etiolated seedlings and flowers. Expressed in roots and green seedlings.

The protein localises to the nucleus. Its function is as follows. Aux/IAA proteins are short-lived transcriptional factors that function as repressors of early auxin response genes at low auxin concentrations. In Oryza sativa subsp. japonica (Rice), this protein is Auxin-responsive protein IAA17 (IAA17).